The primary structure comprises 440 residues: L-gulonolactone oxidase (440 aa).

Positions 17 to 187 (YGCSPEMYYQ…LTVTLQCVPQ (171 aa)) constitute an FAD-binding PCMH-type domain. Histidine 54 bears the Pros-8alpha-FAD histidine mark. The helical transmembrane segment at 251–273 (IGFYLLEFLLWTSTYLPRLVGWI) threads the bilayer.

Belongs to the oxygen-dependent FAD-linked oxidoreductase family. FAD is required as a cofactor. Highly expressed in liver.

The protein localises to the microsome membrane. It localises to the endoplasmic reticulum membrane. It catalyses the reaction L-gulono-1,4-lactone + O2 = L-ascorbate + H2O2 + H(+). The protein operates within cofactor biosynthesis; L-ascorbate biosynthesis via UDP-alpha-D-glucuronate pathway; L-ascorbate from UDP-alpha-D-glucuronate: step 4/4. Oxidizes L-gulono-1,4-lactone to hydrogen peroxide and L-xylo-hexulonolactone which spontaneously isomerizes to L-ascorbate. The protein is L-gulonolactone oxidase (Gulo) of Mus musculus (Mouse).